Reading from the N-terminus, the 212-residue chain is Protein-L-isoaspartate O-methyltransferase (212 aa).

S60 is a catalytic residue.

It belongs to the methyltransferase superfamily. L-isoaspartyl/D-aspartyl protein methyltransferase family.

It is found in the cytoplasm. The catalysed reaction is [protein]-L-isoaspartate + S-adenosyl-L-methionine = [protein]-L-isoaspartate alpha-methyl ester + S-adenosyl-L-homocysteine. In terms of biological role, catalyzes the methyl esterification of L-isoaspartyl residues in peptides and proteins that result from spontaneous decomposition of normal L-aspartyl and L-asparaginyl residues. It plays a role in the repair and/or degradation of damaged proteins. The polypeptide is Protein-L-isoaspartate O-methyltransferase (Pseudomonas putida (strain W619)).